The following is a 238-amino-acid chain: Purine nucleoside phosphorylase DeoD-type (238 aa).

An a purine D-ribonucleoside-binding site is contributed by His4. Phosphate is bound by residues Gly20, Arg24, Arg43, and 87-90 (RVGS). A purine D-ribonucleoside is bound by residues 179 to 181 (EME) and 203 to 204 (SD). Asp204 functions as the Proton donor in the catalytic mechanism.

Belongs to the PNP/UDP phosphorylase family. Homohexamer; trimer of homodimers.

It carries out the reaction a purine D-ribonucleoside + phosphate = a purine nucleobase + alpha-D-ribose 1-phosphate. The enzyme catalyses a purine 2'-deoxy-D-ribonucleoside + phosphate = a purine nucleobase + 2-deoxy-alpha-D-ribose 1-phosphate. Its function is as follows. Catalyzes the reversible phosphorolytic breakdown of the N-glycosidic bond in the beta-(deoxy)ribonucleoside molecules, with the formation of the corresponding free purine bases and pentose-1-phosphate. This chain is Purine nucleoside phosphorylase DeoD-type, found in Histophilus somni (strain 129Pt) (Haemophilus somnus).